Here is a 316-residue protein sequence, read N- to C-terminus: RNA interference defective protein 11 (316 aa).

The RING-type; degenerate zinc finger occupies 183-218 (CYINFNCQTSKVMFGCGHVYCEQCLNSWNDKPCSVC).

In terms of assembly, interacts (via RING-type zinc finger domain) with rde-10.

In terms of biological role, in complex with rde-10, required in the endogenous and exogenous siRNA pathway for biogenesis and accumulation of secondary small interfering RNA (siRNA) intermediates, such as 22G-siRNAs derived from ergo-1 targets. This is RNA interference defective protein 11 from Caenorhabditis elegans.